We begin with the raw amino-acid sequence, 242 residues long: Biosynthetic peptidoglycan transglycosylase (242 aa).

A helical transmembrane segment spans residues 19–39 (LMVVLAVFWGGGIALFSVAPV).

The protein belongs to the glycosyltransferase 51 family.

It is found in the cell inner membrane. It carries out the reaction [GlcNAc-(1-&gt;4)-Mur2Ac(oyl-L-Ala-gamma-D-Glu-L-Lys-D-Ala-D-Ala)](n)-di-trans,octa-cis-undecaprenyl diphosphate + beta-D-GlcNAc-(1-&gt;4)-Mur2Ac(oyl-L-Ala-gamma-D-Glu-L-Lys-D-Ala-D-Ala)-di-trans,octa-cis-undecaprenyl diphosphate = [GlcNAc-(1-&gt;4)-Mur2Ac(oyl-L-Ala-gamma-D-Glu-L-Lys-D-Ala-D-Ala)](n+1)-di-trans,octa-cis-undecaprenyl diphosphate + di-trans,octa-cis-undecaprenyl diphosphate + H(+). The protein operates within cell wall biogenesis; peptidoglycan biosynthesis. Peptidoglycan polymerase that catalyzes glycan chain elongation from lipid-linked precursors. This chain is Biosynthetic peptidoglycan transglycosylase, found in Shigella dysenteriae serotype 1 (strain Sd197).